The chain runs to 267 residues: Very long chain fatty acid elongase 6 (267 aa).

The N-linked (GlcNAc...) asparagine glycan is linked to N2. 7 helical membrane passes run 34-51 (FLFS…RHLM), 70-90 (LAVF…YILM), 111-131 (FWAY…IFII), 136-156 (KLIF…WYSY), 159-179 (MVAG…VMYS), 197-217 (FITL…YLVF), and 234-254 (IFWS…FFFE).

The protein belongs to the ELO family. ELOVL6 subfamily. Post-translationally, N-Glycosylated. As to expression, highly expressed in adrenal gland, liver, white adipose tissue (WAT), adult and fetal brain, cerebellum, spinal cord, testis, skin and peripheral nerve; where lipogenesis and steroidogenesis are active. Weakly expressed in kidney, heart, skeletal muscle, lung, and spleen.

It localises to the endoplasmic reticulum membrane. The enzyme catalyses a very-long-chain acyl-CoA + malonyl-CoA + H(+) = a very-long-chain 3-oxoacyl-CoA + CO2 + CoA. It carries out the reaction hexadecanoyl-CoA + malonyl-CoA + H(+) = 3-oxooctadecanoyl-CoA + CO2 + CoA. It catalyses the reaction (9Z)-hexadecenoyl-CoA + malonyl-CoA + H(+) = 3-oxo-(11Z)-octadecenoyl-CoA + CO2 + CoA. The catalysed reaction is dodecanoyl-CoA + malonyl-CoA + H(+) = 3-oxotetradecanoyl-CoA + CO2 + CoA. The enzyme catalyses tetradecanoyl-CoA + malonyl-CoA + H(+) = 3-oxohexadecanoyl-CoA + CO2 + CoA. It carries out the reaction (9Z)-octadecenoyl-CoA + malonyl-CoA + H(+) = 3-oxo-(11Z)-eicosenoyl-CoA + CO2 + CoA. It catalyses the reaction (9Z,12Z)-octadecadienoyl-CoA + malonyl-CoA + H(+) = (11Z,14Z)-3-oxoicosa-11,14-dienoyl-CoA + CO2 + CoA. The catalysed reaction is (9Z,12Z,15Z)-octadecatrienoyl-CoA + malonyl-CoA + H(+) = (11Z,14Z,17Z)-3-oxoeicosatrienoyl-CoA + CO2 + CoA. It functions in the pathway lipid metabolism; fatty acid biosynthesis. With respect to regulation, the reaction is stimulated by the presence of HSD17B12, the enzyme catalyzing the second step of the elongation cycle. In terms of biological role, catalyzes the first and rate-limiting reaction of the four reactions that constitute the long-chain fatty acids elongation cycle. This endoplasmic reticulum-bound enzymatic process allows the addition of 2 carbons to the chain of long- and very long-chain fatty acids (VLCFAs) per cycle. Condensing enzyme that elongates fatty acids with 12, 14 and 16 carbons with higher activity toward C16:0 acyl-CoAs. Catalyzes the synthesis of unsaturated C16 long chain fatty acids and, to a lesser extent, C18:0 and those with low desaturation degree. May participate in the production of saturated and monounsaturated VLCFAs of different chain lengths that are involved in multiple biological processes as precursors of membrane lipids and lipid mediators. The sequence is that of Very long chain fatty acid elongase 6 from Mus musculus (Mouse).